Here is a 454-residue protein sequence, read N- to C-terminus: Dihydrolipoyllysine-residue succinyltransferase component of 2-oxoglutarate dehydrogenase complex, mitochondrial (454 aa).

A mitochondrion-targeting transit peptide spans 1–68; it reads MLSRSRCVSR…RFFQTTAVCK (68 aa). The 75-residue stretch at 71–145 folds into the Lipoyl-binding domain; that stretch reads VITVQTPAFA…EGGTPLFTLR (75 aa). Phosphoserine is present on Ser82. Lys111 is modified (N6-lipoyllysine). Residues 147–227 form a disordered region; the sequence is TGAAPAKAKP…KGLRSEHREK (81 aa). The segment covering 149–163 has biased composition (low complexity); the sequence is AAPAKAKPAETPAPA. Lys155 carries the post-translational modification N6-acetyllysine. The segment covering 186–197 has biased composition (pro residues); that stretch reads PPVPSPSQPPSS. Residues 198-217 are compositionally biased toward low complexity; that stretch reads KPVSAIKPTAAPPLAEAGAA. Lys268, Lys273, Lys274, Lys278, and Lys308 each carry N6-acetyllysine. Active-site residues include His425 and Asp429.

Belongs to the 2-oxoacid dehydrogenase family. The 2-oxoglutarate dehydrogenase complex is composed of OGDH (2-oxoglutarate dehydrogenase; E1), DLST (dihydrolipoamide succinyltransferase; E2), DLD (dihydrolipoamide dehydrogenase; E3) and the assembly factor KGD4. It contains multiple copies of the three enzymatic components (E1, E2 and E3). In the nucleus, the 2-oxoglutarate dehydrogenase complex associates with KAT2A. Interacts with ABHD11; this interaction maintains the functional lipoylation of the 2-oxoglutarate dehydrogenase complex. It depends on (R)-lipoate as a cofactor.

The protein localises to the mitochondrion matrix. Its subcellular location is the nucleus. The catalysed reaction is N(6)-[(R)-dihydrolipoyl]-L-lysyl-[protein] + succinyl-CoA = N(6)-[(R)-S(8)-succinyldihydrolipoyl]-L-lysyl-[protein] + CoA. It functions in the pathway amino-acid degradation; L-lysine degradation via saccharopine pathway; glutaryl-CoA from L-lysine: step 6/6. The protein operates within carbohydrate metabolism; tricarboxylic acid cycle. Dihydrolipoamide succinyltransferase (E2) component of the 2-oxoglutarate dehydrogenase complex. The 2-oxoglutarate dehydrogenase complex catalyzes the overall conversion of 2-oxoglutarate to succinyl-CoA and CO(2). The 2-oxoglutarate dehydrogenase complex is mainly active in the mitochondrion. A fraction of the 2-oxoglutarate dehydrogenase complex also localizes in the nucleus and is required for lysine succinylation of histones: associates with KAT2A on chromatin and provides succinyl-CoA to histone succinyltransferase KAT2A. The chain is Dihydrolipoyllysine-residue succinyltransferase component of 2-oxoglutarate dehydrogenase complex, mitochondrial from Mus musculus (Mouse).